Here is a 166-residue protein sequence, read N- to C-terminus: Small ribosomal subunit protein uS5 (166 aa).

An S5 DRBM domain is found at leucine 11–valine 74.

This sequence belongs to the universal ribosomal protein uS5 family. Part of the 30S ribosomal subunit. Contacts proteins S4 and S8.

In terms of biological role, with S4 and S12 plays an important role in translational accuracy. Located at the back of the 30S subunit body where it stabilizes the conformation of the head with respect to the body. The polypeptide is Small ribosomal subunit protein uS5 (Buchnera aphidicola subsp. Acyrthosiphon kondoi (Acyrthosiphon kondoi symbiotic bacterium)).